The following is a 374-amino-acid chain: tRNA-specific 2-thiouridylase MnmA (374 aa).

ATP contacts are provided by residues Gly-17–Ser-24 and Met-43. Residues Asn-103 to Asp-105 are interaction with target base in tRNA. Residue Cys-108 is the Nucleophile of the active site. The cysteines at positions 108 and 204 are disulfide-linked. Gly-132 contributes to the ATP binding site. Residues Lys-154–Gln-156 form an interaction with tRNA region. Cys-204 serves as the catalytic Cysteine persulfide intermediate. The tract at residues Arg-316 to Tyr-317 is interaction with tRNA.

This sequence belongs to the MnmA/TRMU family.

It localises to the cytoplasm. It carries out the reaction S-sulfanyl-L-cysteinyl-[protein] + uridine(34) in tRNA + AH2 + ATP = 2-thiouridine(34) in tRNA + L-cysteinyl-[protein] + A + AMP + diphosphate + H(+). Its function is as follows. Catalyzes the 2-thiolation of uridine at the wobble position (U34) of tRNA, leading to the formation of s(2)U34. The chain is tRNA-specific 2-thiouridylase MnmA from Pseudomonas putida (strain W619).